The primary structure comprises 303 residues: Nucleotide-binding protein Dvul_1502 (303 aa).

Glycine 23–serine 30 is a binding site for ATP. Aspartate 75 to glutamate 78 contacts GTP.

It belongs to the RapZ-like family.

Functionally, displays ATPase and GTPase activities. The protein is Nucleotide-binding protein Dvul_1502 of Nitratidesulfovibrio vulgaris (strain DP4) (Desulfovibrio vulgaris).